The following is a 215-amino-acid chain: Nascent polypeptide-associated complex subunit alpha-2 (215 aa).

The tract at residues 1-51 is disordered; it reads MPGEATETVPATEQELPQSQAETGSGTASDSGESVPGIEEQDSTQTTTQKA. The span at 9 to 32 shows a compositional bias: polar residues; it reads VPATEQELPQSQAETGSGTASDSG. Serine 43 and serine 132 each carry phosphoserine. The NAC-A/B domain maps to 70–135; sequence SRSEKRARKA…AKIQDLSQQA (66 aa). Residue lysine 142 is modified to N6-acetyllysine; alternate. Residue lysine 142 forms a Glycyl lysine isopeptide (Lys-Gly) (interchain with G-Cter in SUMO2); alternate linkage. Threonine 161 carries the post-translational modification Phosphothreonine. Serine 166, serine 186, serine 191, and serine 203 each carry phosphoserine. The UBA domain maps to 176-213; that stretch reads VEVKDVKLVMSQANVSRAKAVRALKNNSNDIVNAIMEL. Threonine 214 is subject to Phosphothreonine.

The protein belongs to the NAC-alpha family. Part of the nascent polypeptide-associated complex (NAC), consisting of NACA and BTF3. NAC associates with ribosomes through the BTF3 subunit. Both subunits can contact nascent polypeptide chains. In terms of tissue distribution, expressed specifically in testis and skeletal muscle.

The protein resides in the cytoplasm. It is found in the nucleus. Functionally, prevents inappropriate targeting of non-secretory polypeptides to the endoplasmic reticulum (ER). Binds to nascent polypeptide chains as they emerge from the ribosome and blocks their interaction with the signal recognition particle (SRP), which normally targets nascent secretory peptides to the ER. Also reduces the inherent affinity of ribosomes for protein translocation sites in the ER membrane (M sites). This Homo sapiens (Human) protein is Nascent polypeptide-associated complex subunit alpha-2 (NACA2).